A 336-amino-acid polypeptide reads, in one-letter code: Inositol 2-dehydrogenase (336 aa).

The protein belongs to the Gfo/Idh/MocA family. Homotetramer.

The catalysed reaction is myo-inositol + NAD(+) = scyllo-inosose + NADH + H(+). Involved in the oxidation of myo-inositol (MI) to 2-keto-myo-inositol (2KMI or 2-inosose). The chain is Inositol 2-dehydrogenase from Acidiphilium cryptum (strain JF-5).